We begin with the raw amino-acid sequence, 396 residues long: tRNA-specific 2-thiouridylase MnmA (396 aa).

ATP-binding positions include 11 to 18 (GLSGGVDS) and Met-37. An interaction with target base in tRNA region spans residues 97 to 99 (NPD). Cys-102 acts as the Nucleophile in catalysis. Cys-102 and Cys-225 are disulfide-bonded. ATP is bound at residue Gly-126. The interval 175 to 177 (KDQ) is interaction with tRNA. Cys-225 serves as the catalytic Cysteine persulfide intermediate. The tract at residues 343 to 344 (RY) is interaction with tRNA.

Belongs to the MnmA/TRMU family.

The protein localises to the cytoplasm. The catalysed reaction is S-sulfanyl-L-cysteinyl-[protein] + uridine(34) in tRNA + AH2 + ATP = 2-thiouridine(34) in tRNA + L-cysteinyl-[protein] + A + AMP + diphosphate + H(+). Its function is as follows. Catalyzes the 2-thiolation of uridine at the wobble position (U34) of tRNA, leading to the formation of s(2)U34. This is tRNA-specific 2-thiouridylase MnmA from Methylibium petroleiphilum (strain ATCC BAA-1232 / LMG 22953 / PM1).